The following is a 352-amino-acid chain: uncharacterized protein (352 aa).

3 N-linked (GlcNAc...) asparagine glycosylation sites follow: N14, N52, and N70. The interval 41-73 is disordered; that stretch reads LSDYKKNKDTLNNSNNNINQPFENSNNFNNNSK. Residues 50–72 are compositionally biased toward low complexity; it reads TLNNSNNNINQPFENSNNFNNNS. The chain crosses the membrane as a helical span at residues 131–151; sequence IIFKSSGLLITLLVLYLGTFF. Residues N165, N186, N192, N193, N203, and N289 are each glycosylated (N-linked (GlcNAc...) asparagine). Low complexity predominate over residues 193–213; it reads NSSNSNNNNINNSNNNNNNNN. Residues 193–219 form a disordered region; sequence NSSNSNNNNINNSNNNNNNNNRILSPN.

The protein resides in the membrane. This is an uncharacterized protein from Dictyostelium discoideum (Social amoeba).